The following is a 286-amino-acid chain: Bifunctional protein FolD (286 aa).

NADP(+) contacts are provided by residues Gly-165 to Ser-167 and Ser-190.

Belongs to the tetrahydrofolate dehydrogenase/cyclohydrolase family. As to quaternary structure, homodimer.

It catalyses the reaction (6R)-5,10-methylene-5,6,7,8-tetrahydrofolate + NADP(+) = (6R)-5,10-methenyltetrahydrofolate + NADPH. It carries out the reaction (6R)-5,10-methenyltetrahydrofolate + H2O = (6R)-10-formyltetrahydrofolate + H(+). The protein operates within one-carbon metabolism; tetrahydrofolate interconversion. In terms of biological role, catalyzes the oxidation of 5,10-methylenetetrahydrofolate to 5,10-methenyltetrahydrofolate and then the hydrolysis of 5,10-methenyltetrahydrofolate to 10-formyltetrahydrofolate. This is Bifunctional protein FolD from Burkholderia orbicola (strain MC0-3).